Reading from the N-terminus, the 364-residue chain is Chorismate synthase (364 aa).

NADP(+) is bound by residues Arg-48 and Arg-54. Residues Arg-125 to Ser-127, Asn-238 to Ala-239, Gly-278, Lys-293 to Ser-297, and Arg-319 contribute to the FMN site.

Belongs to the chorismate synthase family. In terms of assembly, homotetramer. Requires FMNH2 as cofactor.

It carries out the reaction 5-O-(1-carboxyvinyl)-3-phosphoshikimate = chorismate + phosphate. It functions in the pathway metabolic intermediate biosynthesis; chorismate biosynthesis; chorismate from D-erythrose 4-phosphate and phosphoenolpyruvate: step 7/7. Its function is as follows. Catalyzes the anti-1,4-elimination of the C-3 phosphate and the C-6 proR hydrogen from 5-enolpyruvylshikimate-3-phosphate (EPSP) to yield chorismate, which is the branch point compound that serves as the starting substrate for the three terminal pathways of aromatic amino acid biosynthesis. This reaction introduces a second double bond into the aromatic ring system. This is Chorismate synthase from Shewanella woodyi (strain ATCC 51908 / MS32).